We begin with the raw amino-acid sequence, 119 residues long: Protein phosphatase EYA4 (119 aa).

This sequence belongs to the HAD-like hydrolase superfamily. EYA family. Mg(2+) is required as a cofactor.

It localises to the cytoplasm. The protein resides in the nucleus. It carries out the reaction O-phospho-L-tyrosyl-[protein] + H2O = L-tyrosyl-[protein] + phosphate. Tyrosine phosphatase that specifically dephosphorylates 'Tyr-142' of histone H2AX (H2AXY142ph). 'Tyr-142' phosphorylation of histone H2AX plays a central role in DNA repair and acts as a mark that distinguishes between apoptotic and repair responses to genotoxic stress. Promotes efficient DNA repair by dephosphorylating H2AX, promoting the recruitment of DNA repair complexes containing MDC1. Its function as histone phosphatase probably explains its role in transcription regulation during organogenesis. May be involved in development of the eye. This is Protein phosphatase EYA4 (eya4) from Takifugu rubripes (Japanese pufferfish).